Here is a 1341-residue protein sequence, read N- to C-terminus: DNA-directed RNA polymerase subunit beta (1341 aa).

Belongs to the RNA polymerase beta chain family. The RNAP catalytic core consists of 2 alpha, 1 beta, 1 beta' and 1 omega subunit. When a sigma factor is associated with the core the holoenzyme is formed, which can initiate transcription.

The catalysed reaction is RNA(n) + a ribonucleoside 5'-triphosphate = RNA(n+1) + diphosphate. DNA-dependent RNA polymerase catalyzes the transcription of DNA into RNA using the four ribonucleoside triphosphates as substrates. The polypeptide is DNA-directed RNA polymerase subunit beta (Pseudoalteromonas translucida (strain TAC 125)).